The chain runs to 666 residues: Peptidase S41 family protein phomP1 (666 aa).

A signal peptide spans 1–27 (MSSFLVQTAVVRLFLLGVVFWFPFALS). N-linked (GlcNAc...) asparagine glycosylation is found at Asn-70, Asn-214, and Asn-234. A peptidase S41 domain region spans residues 303–504 (DVAVLQITSF…LLQAQGVRTV (202 aa)). Asn-555 and Asn-612 each carry an N-linked (GlcNAc...) asparagine glycan.

This sequence belongs to the peptidase S41A family.

The protein operates within mycotoxin biosynthesis. Its function is as follows. Peptidase S41 family protein; part of the gene cluster that mediates the biosynthesis of the phomopsins, a group of hexapeptide mycotoxins which infects lupins and causes lupinosis disease in livestock. Within the pathway, phomP1 and phomP1' are probably involved in the processing of the phomA and phomA' precursors. The pathway starts with the processing of the precursor phomA by several endopeptidases including kexin proteases as well as the cluster-specific S41 family peptidase phomP1 and the oligopeptidase phomG to produce 10 identical copies of the hexapeptide Tyr-Val-Ile-Pro-Ile-Asp. After being excised from the precursor peptide, the core peptides are cyclized and modified post-translationally by enzymes encoded within the gene cluster. The timing and order of proteolysis of the phomA precursor and PTMs are still unknown. Two tyrosinase-like enzymes, phomQ1 and phomQ2, catalyze the chlorination and hydroxylation of Tyr, respectively. PhomYb, is proposed to be involved in the construction of the macrocyclic structure. The other 4 ustYa family proteins may be involved in PTMs that generate the unique structure of phomopsin A. PhomYa is required for the hydroxylation of C-beta of Tyr. PhomYc, phomYd, and phomYe are responsible for the biosynthesis of 2,3-dehydroisoleucine (dIle), 2,3-dehydroaspartic acid (dAsp), and 3,4-dehydroproline (dPro), respectively. While dIle formation by phomYc is indispensable for the installation of dAsp by phomYd, the order of the other PTMs have not been elucidated yet. Most of the biosynthetic enzymes likely have broad substrate specificity, and thus, there might be a metabolic grid from a precursor to phomopsin A. The enzyme(s) responsible for the biosynthesis of 3,4-dehydrovaline (dVal) have also not been identified yet. Finally, phomM acts as an S-adenosylmethionine-dependent alpha-N-methyltransferase that catalyzes two successive N-methylation reactions, converting N-desmethyl-phomopsin A to phomopsin A and phomopsin A further to an N,N-dimethylated congener called phomopsin E. The sequence is that of Peptidase S41 family protein phomP1 from Diaporthe leptostromiformis (Lupinosis disease fungus).